A 337-amino-acid polypeptide reads, in one-letter code: Trace amine-associated receptor 5 (337 aa).

Residues 1–38 (MRAVLLPGSGEQPTAFCYQVNGSCPRTVHPLAIQVVIY) lie on the Extracellular side of the membrane. N21 carries N-linked (GlcNAc...) asparagine glycosylation. Cystine bridges form between C24–C188 and C99–C192. A helical membrane pass occupies residues 39-59 (LACAVGVLITVLGNLFVVFAV). Over 60-70 (SYFKVLHTPTN) the chain is Cytoplasmic. A helical transmembrane segment spans residues 71–91 (FLLLSLALADMLLGLLVLPLS). At 92–109 (TVRSVESCWFFGDFLCRL) the chain is on the extracellular side. A helical transmembrane segment spans residues 110–130 (HTYLDTLFCLTSIFHLCFISI). Residues 131 to 154 (DRHCAICDPLLYPSKFTVRTALRY) lie on the Cytoplasmic side of the membrane. The helical transmembrane segment at 155–175 (IVAGWGIPAAYTAFFLYTDVV) threads the bilayer. The interval 176–189 (ERALSQWLEEMPCV) is extracellular Loop 2 (ECL2). The Extracellular portion of the chain corresponds to 176-204 (ERALSQWLEEMPCVGSCQLLFNKFWGWLN). Residues 205 to 225 (FPAFFVPCLIMISLYLKIFVV) traverse the membrane as a helical segment. The Cytoplasmic segment spans residues 226-253 (ATRQAQQIRTLSQSLAGAVKRERKAAKT). The chain crosses the membrane as a helical span at residues 254–274 (LGIAVGIYLVCWLPFTVDTLV). Over 275–284 (DSLLNFITPP) the chain is Extracellular. Residues 285-307 (LVFDIFIWFAYFNSACNPIIYVF) form a helical membrane-spanning segment. Over 308–337 (SYRWFRKALKLLLSREIFSPRTPTVDLYHD) the chain is Cytoplasmic.

It belongs to the G-protein coupled receptor 1 family. As to expression, specifically expressed in neurons of the olfactory epithelium, to discrete glomeruli predominantly localized to a confined bulb region. Present in the dorsal area of the main olfactory epithelium. Also present in the limbic brain areas receiving projection from the olfactory system and involved in the regulation of emotions. Also expressed in some brain regions outside the olfactory epithelium, such as the hippocampus, cerebellum, cortex, raphe nuclei, hypothalamus, and habenula.

It localises to the cell membrane. With respect to regulation, inhibited by 1-[(5,5- diphenyloxolan-2-yl)methyl]-4-(2-methoxyphenyl)piperazine and N-[(2,2-diphenyl-1,3-dioxolan-4-yl)methyl]-2-(2- methoxyphenoxy)ethan-1-amine small molecules. In terms of biological role, olfactory receptor specific for trimethylamine, a trace amine enriched in the urine of male mice, playing a role in social behavior. Also activated by N-methylpiperidine. Trimethylamine is present at high concentration in the urine of male mice after puberty and acts as an attractant. Trimethylamine-binding causes a conformation change that triggers signaling via G(s)-class of G alpha proteins (GNAL or GNAS). Also required to provide olfactory input into limbic brain areas to regulate emotional behaviors likely via modulation of the serotonin system. This Mus musculus (Mouse) protein is Trace amine-associated receptor 5.